The chain runs to 246 residues: Probable S-methyl-5'-thioinosine phosphorylase (246 aa).

Phosphate-binding positions include T10 and 52 to 53; that span reads RH. Position 185 (M185) interacts with substrate. T186 serves as a coordination point for phosphate. A substrate-binding site is contributed by 209-211; that stretch reads NPA.

Belongs to the PNP/MTAP phosphorylase family. MTAP subfamily. As to quaternary structure, homotrimer.

The catalysed reaction is S-methyl-5'-thioinosine + phosphate = 5-(methylsulfanyl)-alpha-D-ribose 1-phosphate + hypoxanthine. It participates in purine metabolism; purine nucleoside salvage. Its function is as follows. Catalyzes the reversible phosphorylation of S-methyl-5'-thioinosine (MTI) to hypoxanthine and 5-methylthioribose-1-phosphate. Involved in the breakdown of S-methyl-5'-thioadenosine (MTA), a major by-product of polyamine biosynthesis. Catabolism of (MTA) occurs via deamination to MTI and phosphorolysis to hypoxanthine. The polypeptide is Probable S-methyl-5'-thioinosine phosphorylase (Pseudomonas syringae pv. tomato (strain ATCC BAA-871 / DC3000)).